The following is a 290-amino-acid chain: Poly-beta-1,6-N-acetyl-D-glucosamine N-deacetylase (290 aa).

Positions 1 to 28 (MKYRKFIILVLSILIILPVSTLDGHHIA) are cleaved as a signal peptide. The 177-residue stretch at 114–290 (RSVWINFDDM…KRWDGFHEKD (177 aa)) folds into the NodB homology domain.

Belongs to the polysaccharide deacetylase family.

It is found in the secreted. It localises to the cell wall. Catalyzes the N-deacetylation of poly-beta-1,6-N-acetyl-D-glucosamine (PNAG, also referred to as PIA), a biofilm adhesin polysaccharide. N-deacetylation is crucial for attachment of the polysaccharide to the bacterial cell surface; it leads to the introduction of positive charges in the otherwise neutral PIA polymer, allowing electrostatic interactions. The chain is Poly-beta-1,6-N-acetyl-D-glucosamine N-deacetylase (icaB) from Staphylococcus aureus (strain NCTC 8325 / PS 47).